A 128-amino-acid chain; its full sequence is Probable prefoldin subunit 6 (128 aa).

Belongs to the prefoldin subunit beta family. In terms of assembly, heterohexamer of two PFD-alpha type and four PFD-beta type subunits.

It localises to the cytoplasm. Its function is as follows. Binds specifically to cytosolic chaperonin (c-CPN) and transfers target proteins to it. Binds to nascent polypeptide chain and promotes folding in an environment in which there are many competing pathways for nonnative proteins. Required for positioning of the mitotic spindle. In Caenorhabditis briggsae, this protein is Probable prefoldin subunit 6.